Reading from the N-terminus, the 257-residue chain is Fimbrial assembly protein, serogroup I (257 aa).

This Dichelobacter nodosus (Bacteroides nodosus) protein is Fimbrial assembly protein, serogroup I (fimB).